A 279-amino-acid polypeptide reads, in one-letter code: Prephenate dehydratase (279 aa).

Positions 2 to 178 (KIAYLGPRGS…NSTRFWLLGK (177 aa)) constitute a Prephenate dehydratase domain. Residues 194 to 270 (LALTLPDNLP…LGVKVRLLGN (77 aa)) form the ACT domain.

The enzyme catalyses prephenate + H(+) = 3-phenylpyruvate + CO2 + H2O. The protein operates within amino-acid biosynthesis; L-phenylalanine biosynthesis; phenylpyruvate from prephenate: step 1/1. This chain is Prephenate dehydratase (pheA), found in Lactococcus lactis subsp. lactis (strain IL1403) (Streptococcus lactis).